Consider the following 342-residue polypeptide: Paired box protein Pax-9 (342 aa).

Residues 4–130 constitute a DNA-binding region (paired); sequence AFGEVNQLGG…SSISRILRNK (127 aa). A PAI subdomain region spans residues 7 to 63; sequence EVNQLGGVFVNGRPLPNAIRLRIVELAQLGIRPCDISRQLRVSHGCVSKILARYNET. The segment at 82 to 130 is RED subdomain; it reads TVVKHIRTYKQRDPGIFAWEIRDRLLADGVCDKYNVPSVSSISRILRNK. The interaction with KDM5B stretch occupies residues 168–189; it reads AAAAKVPTPPGVPAIPGSVALP.

In terms of assembly, interacts with KDM5B. In terms of tissue distribution, in the embryo, expressed in pharyngeal pouches and derivatives, developing vertebral column, tail, head and limbs.

It localises to the nucleus. Transcription factor required for normal development of thymus, parathyroid glands, ultimobranchial bodies, teeth, skeletal elements of skull and larynx as well as distal limbs. The sequence is that of Paired box protein Pax-9 (Pax9) from Mus musculus (Mouse).